A 305-amino-acid chain; its full sequence is Sulfate adenylyltransferase subunit 2 (305 aa).

The protein belongs to the PAPS reductase family. CysD subfamily. As to quaternary structure, heterodimer composed of CysD, the smaller subunit, and CysN.

The catalysed reaction is sulfate + ATP + H(+) = adenosine 5'-phosphosulfate + diphosphate. Its pathway is sulfur metabolism; hydrogen sulfide biosynthesis; sulfite from sulfate: step 1/3. With CysN forms the ATP sulfurylase (ATPS) that catalyzes the adenylation of sulfate producing adenosine 5'-phosphosulfate (APS) and diphosphate, the first enzymatic step in sulfur assimilation pathway. APS synthesis involves the formation of a high-energy phosphoric-sulfuric acid anhydride bond driven by GTP hydrolysis by CysN coupled to ATP hydrolysis by CysD. The protein is Sulfate adenylyltransferase subunit 2 of Ectopseudomonas mendocina (strain ymp) (Pseudomonas mendocina).